The chain runs to 195 residues: Heavy metal-associated isoprenylated plant protein 18 (195 aa).

2 disordered regions span residues 36 to 76 (DVVQ…KPET) and 145 to 172 (EKEK…NPSS). Composition is skewed to basic and acidic residues over residues 47–76 (TVTK…KPET) and 145–157 (EKEK…ITKD). One can recognise an HMA domain in the interval 78 to 149 (TRKLEIHIAF…RIVKMEKEKK (72 aa)). The residue at position 192 (Cys-192) is a Cysteine methyl ester. A lipid anchor (S-farnesyl cysteine) is attached at Cys-192. Residues 193-195 (SIS) constitute a propeptide, removed in mature form.

Belongs to the HIPP family.

In terms of biological role, probable heavy-metal-binding protein. Required for female gametophyte development and function. This Arabidopsis thaliana (Mouse-ear cress) protein is Heavy metal-associated isoprenylated plant protein 18.